The primary structure comprises 315 residues: Malate dehydrogenase (315 aa).

9–15 is a binding site for NAD(+); the sequence is GGSGNVG. The substrate site is built by arginine 84 and arginine 90. Residues asparagine 97 and 120–122 each bind NAD(+); that span reads VSN. Substrate-binding residues include asparagine 122 and arginine 153. The active-site Proton acceptor is histidine 177.

It belongs to the LDH/MDH superfamily.

The catalysed reaction is (S)-malate + NAD(+) = oxaloacetate + NADH + H(+). Functionally, catalyzes the reversible oxidation of malate to oxaloacetate. The protein is Malate dehydrogenase of Helicobacter hepaticus (strain ATCC 51449 / 3B1).